A 485-amino-acid chain; its full sequence is Sodium-coupled neutral amino acid symporter 1 (485 aa).

The Cytoplasmic portion of the chain corresponds to 1–74 (MMHFKSGLEL…EYIPGTTSLG (74 aa)). At S6 the chain carries Phosphoserine. T11 bears the Phosphothreonine mark. Residues S25, S28, S49, and S52 each carry the phosphoserine modification. T54 carries the phosphothreonine modification. S56 is modified (phosphoserine). Residues 75–97 (MSVFNLSNAIMGSGILGLAFALA) form a helical membrane-spanning segment. At 98 to 112 (NTGILLFLILLTSVT) the chain is on the extracellular side. A helical membrane pass occupies residues 113-133 (LLSIYSINLLLICSKETGCMV). The Cytoplasmic segment spans residues 134–148 (YEKLGEQVFGTTGKL). Residues 149–169 (VIFGATSLQNTGAMLSYLFIV) form a helical membrane-spanning segment. Topologically, residues 170 to 188 (KNELPSAIKSLMGEEDAFS) are extracellular. Residues 189-211 (AWYVDGRVLVVMVTFGIILPLCL) form a helical membrane-spanning segment. Over 212 to 216 (LKNLG) the chain is Cytoplasmic. The chain crosses the membrane as a helical span at residues 217 to 237 (YLGYTSGFSLSCMMFFLIVVI). At 238-273 (YKKFQTPCMSVEQNSTVSANVTDACTPKYVTFNSKT) the chain is on the extracellular side. An intrachain disulfide couples C245 to C262. N-linked (GlcNAc...) asparagine glycans are attached at residues N251 and N257. The chain crosses the membrane as a helical span at residues 274-294 (VYALPTIAFAFVCHPSVLPIY). Over 295-310 (SELKDRSQKKMQMVSN) the chain is Cytoplasmic. Residues 311–331 (ISFFAMFVMYFLTAIFGYLTF) traverse the membrane as a helical segment. The Extracellular portion of the chain corresponds to 332-348 (YEKVQSDLLHKYQSTGD). Residues 349 to 369 (ILILTVRLAVIVAVILTVPVL) form a helical membrane-spanning segment. The Cytoplasmic segment spans residues 370 to 391 (FFTVRSSLFELAKKTKFHLCRH). A helical transmembrane segment spans residues 392-412 (VLVTIILLIIINLLVIFIPSM). Topologically, residues 413 to 414 (KD) are extracellular. The helical transmembrane segment at 415 to 435 (IFGVVGVTSANMLIFILPSSL) threads the bilayer. Topologically, residues 436–450 (YLKITNQDGDKGTQR) are cytoplasmic. The chain crosses the membrane as a helical span at residues 451 to 471 (IWAALFLGLGVLFSLISIPLV). Residues 472–485 (IYDWACSSGTDEGH) are Extracellular-facing.

Belongs to the amino acid/polyamine transporter 2 family. N-glycosylation plays an important role in the L-glutamine transport. In terms of tissue distribution, specifically expressed in brain and retina (at protein level). Also detected in spleen, small intestine and lung.

The protein resides in the cell membrane. It carries out the reaction L-glutamine(in) + Na(+)(in) = L-glutamine(out) + Na(+)(out). It catalyses the reaction L-alanine(in) + Na(+)(in) = L-alanine(out) + Na(+)(out). The enzyme catalyses L-histidine(in) + Na(+)(in) = L-histidine(out) + Na(+)(out). The catalysed reaction is L-asparagine(in) + Na(+)(in) = L-asparagine(out) + Na(+)(out). It carries out the reaction L-serine(in) + Na(+)(in) = L-serine(out) + Na(+)(out). It catalyses the reaction L-cysteine(in) + Na(+)(in) = L-cysteine(out) + Na(+)(out). The enzyme catalyses L-methionine(in) + Na(+)(in) = L-methionine(out) + Na(+)(out). The catalysed reaction is glycine(in) + Na(+)(in) = glycine(out) + Na(+)(out). It carries out the reaction L-threonine(in) + Na(+)(in) = L-threonine(out) + Na(+)(out). It catalyses the reaction L-proline(in) + Na(+)(in) = L-proline(out) + Na(+)(out). With respect to regulation, inhibited by alpha-(methylamino)isobutyric acid (MeAIB). Inhibited by lithium, potassium, choline ions, N-methylglucamine. The pH dependence has an allosteric effect on the transport. In terms of biological role, symporter that cotransports short-chain neutral amino acids and sodium ions from the extraccellular to the intracellular side of the cell membrane. The transport is elctrogenic, pH dependent and driven by the Na(+) electrochemical gradient. Participates in the astroglia-derived glutamine transport into GABAergic interneurons for neurotransmitter GABA de novo synthesis. May also contributes to amino acid transport in placental trophoblast. Regulates synaptic plasticity. This Mus musculus (Mouse) protein is Sodium-coupled neutral amino acid symporter 1.